A 453-amino-acid chain; its full sequence is Iron-sulfur cluster assembly SufBD family protein slr0076 (453 aa).

This sequence belongs to the iron-sulfur cluster assembly SufBD family.

The protein is Iron-sulfur cluster assembly SufBD family protein slr0076 of Synechocystis sp. (strain ATCC 27184 / PCC 6803 / Kazusa).